A 477-amino-acid polypeptide reads, in one-letter code: Multidrug resistance protein PmpM (477 aa).

12 helical membrane-spanning segments follow: residues 21–41 (LLTL…MGFV), 56–76 (AVAL…GTLL), 104–124 (LALL…EPIL), 133–153 (LIGP…AAAL), 171–191 (MVLG…LIYG), 202–222 (GCGW…LFWV), 253–273 (LPIG…ALLI), 286–306 (IALN…MAVT), 326–346 (GVGM…MLLL), 360–380 (VIAI…SDAL), 398–418 (MIMT…SLGL), and 431–451 (LWQG…IRLA).

It belongs to the multi antimicrobial extrusion (MATE) (TC 2.A.66.1) family.

The protein localises to the cell inner membrane. Functionally, multidrug efflux pump that functions as an H(+)/drug antiporter. Confers resistance to benzalkonium chloride, fluoroquinolones, ethidium bromide, acriflavine and tetraphenylphosphonium chloride. The polypeptide is Multidrug resistance protein PmpM (pmpM) (Pseudomonas aeruginosa (strain ATCC 15692 / DSM 22644 / CIP 104116 / JCM 14847 / LMG 12228 / 1C / PRS 101 / PAO1)).